We begin with the raw amino-acid sequence, 336 residues long: UDP-3-O-acylglucosamine N-acyltransferase (336 aa).

Catalysis depends on H237, which acts as the Proton acceptor.

This sequence belongs to the transferase hexapeptide repeat family. LpxD subfamily. As to quaternary structure, homotrimer.

It carries out the reaction a UDP-3-O-[(3R)-3-hydroxyacyl]-alpha-D-glucosamine + a (3R)-hydroxyacyl-[ACP] = a UDP-2-N,3-O-bis[(3R)-3-hydroxyacyl]-alpha-D-glucosamine + holo-[ACP] + H(+). The protein operates within bacterial outer membrane biogenesis; LPS lipid A biosynthesis. Functionally, catalyzes the N-acylation of UDP-3-O-acylglucosamine using 3-hydroxyacyl-ACP as the acyl donor. Is involved in the biosynthesis of lipid A, a phosphorylated glycolipid that anchors the lipopolysaccharide to the outer membrane of the cell. The polypeptide is UDP-3-O-acylglucosamine N-acyltransferase (Alcanivorax borkumensis (strain ATCC 700651 / DSM 11573 / NCIMB 13689 / SK2)).